Consider the following 1642-residue polypeptide: DNA-directed RNA polymerase I subunit RPA1 (1642 aa).

Zn(2+)-binding residues include C66, C69, C75, and H78. Mg(2+) is bound by residues D565, D567, and D569. The bridging helix stretch occupies residues 939–951; it reads PQDFFFHCMAGRE. The disordered stretch occupies residues 1337-1428; sequence DADKDDDNDL…GNDNDGDDKA (92 aa). A compositionally biased stretch (acidic residues) spans 1340–1350; it reads KDDDNDLDNGD. The segment covering 1351–1361 has biased composition (basic and acidic residues); it reads EVGRSKAKAND. Acidic residues-rich tracts occupy residues 1362–1373 and 1386–1424; these read DDSSDDNDDDDA and KDYD…DNDG. 2 positions are modified to phosphoserine: S1364 and S1365.

The protein belongs to the RNA polymerase beta' chain family. As to quaternary structure, component of the RNA polymerase I (Pol I) complex consisting of at least 13 subunits. Post-translationally, phosphorylated.

It is found in the nucleus. The protein localises to the nucleolus. The enzyme catalyses RNA(n) + a ribonucleoside 5'-triphosphate = RNA(n+1) + diphosphate. In terms of biological role, DNA-dependent RNA polymerase catalyzes the transcription of DNA into RNA using the four ribonucleoside triphosphates as substrates. Largest and catalytic core component of RNA polymerase I which synthesizes ribosomal RNA precursors. Forms the polymerase active center together with the second largest subunit. A single stranded DNA template strand of the promoter is positioned within the central active site cleft of Pol I. A bridging helix emanates from RPA1 and crosses the cleft near the catalytic site and is thought to promote translocation of Pol I by acting as a ratchet that moves the RNA-DNA hybrid through the active site by switching from straight to bent conformations at each step of nucleotide addition. This chain is DNA-directed RNA polymerase I subunit RPA1 (RpI1), found in Drosophila melanogaster (Fruit fly).